A 1370-amino-acid polypeptide reads, in one-letter code: DNA-directed RNA polymerase subunit beta (1370 aa).

Belongs to the RNA polymerase beta chain family. In terms of assembly, the RNAP catalytic core consists of 2 alpha, 1 beta, 1 beta' and 1 omega subunit. When a sigma factor is associated with the core the holoenzyme is formed, which can initiate transcription.

The catalysed reaction is RNA(n) + a ribonucleoside 5'-triphosphate = RNA(n+1) + diphosphate. In terms of biological role, DNA-dependent RNA polymerase catalyzes the transcription of DNA into RNA using the four ribonucleoside triphosphates as substrates. The polypeptide is DNA-directed RNA polymerase subunit beta (Geobacter metallireducens (strain ATCC 53774 / DSM 7210 / GS-15)).